A 548-amino-acid polypeptide reads, in one-letter code: Membrane protein insertase YidC (548 aa).

5 helical membrane-spanning segments follow: residues 6-26, 349-369, 424-444, 455-475, and 503-523; these read NLILIGLLFVSFLLWQQWESD, TVFQGFVHNWGVAIIMLTLLV, LGGCLPILVQMPIFIALYWAL, FALWITDLSVKDPFFVLPILM, and PIIFTFMFLWFPAGLTLYWLV.

It belongs to the OXA1/ALB3/YidC family. Type 1 subfamily. As to quaternary structure, interacts with the Sec translocase complex via SecD. Specifically interacts with transmembrane segments of nascent integral membrane proteins during membrane integration.

It is found in the cell inner membrane. In terms of biological role, required for the insertion and/or proper folding and/or complex formation of integral membrane proteins into the membrane. Involved in integration of membrane proteins that insert both dependently and independently of the Sec translocase complex, as well as at least some lipoproteins. Aids folding of multispanning membrane proteins. The sequence is that of Membrane protein insertase YidC from Aeromonas salmonicida (strain A449).